The following is a 195-amino-acid chain: Xanthine phosphoribosyltransferase (195 aa).

Xanthine-binding residues include Leu-20 and Asn-27. A 5-phospho-alpha-D-ribose 1-diphosphate-binding site is contributed by 128–132 (ANGQA). Lys-156 contacts xanthine.

Belongs to the purine/pyrimidine phosphoribosyltransferase family. Xpt subfamily. As to quaternary structure, homodimer.

It localises to the cytoplasm. It catalyses the reaction XMP + diphosphate = xanthine + 5-phospho-alpha-D-ribose 1-diphosphate. Its pathway is purine metabolism; XMP biosynthesis via salvage pathway; XMP from xanthine: step 1/1. Its function is as follows. Converts the preformed base xanthine, a product of nucleic acid breakdown, to xanthosine 5'-monophosphate (XMP), so it can be reused for RNA or DNA synthesis. This is Xanthine phosphoribosyltransferase from Limosilactobacillus fermentum (strain NBRC 3956 / LMG 18251) (Lactobacillus fermentum).